The primary structure comprises 201 residues: FMN-dependent NADH:quinone oxidoreductase (201 aa).

Residues 92–95 and 136–139 contribute to the FMN site; these read MWNL and STGG.

The protein belongs to the azoreductase type 1 family. Homodimer. Requires FMN as cofactor.

It carries out the reaction 2 a quinone + NADH + H(+) = 2 a 1,4-benzosemiquinone + NAD(+). The enzyme catalyses N,N-dimethyl-1,4-phenylenediamine + anthranilate + 2 NAD(+) = 2-(4-dimethylaminophenyl)diazenylbenzoate + 2 NADH + 2 H(+). Quinone reductase that provides resistance to thiol-specific stress caused by electrophilic quinones. Its function is as follows. Also exhibits azoreductase activity. Catalyzes the reductive cleavage of the azo bond in aromatic azo compounds to the corresponding amines. The sequence is that of FMN-dependent NADH:quinone oxidoreductase from Coprothermobacter proteolyticus (strain ATCC 35245 / DSM 5265 / OCM 4 / BT).